The following is a 316-amino-acid chain: Dehydrogenase/reductase SDR family protein 7-like (316 aa).

The Cytoplasmic segment spans residues 1–18 (MFFYKIIYFIGFPYIVLR). Residues 19-39 (LIVSIILPIASLYFIYCNFIA) form a helical; Signal-anchor for type II membrane protein membrane-spanning segment. Topologically, residues 40–316 (PKLREKPESS…HKFASSSVKK (277 aa)) are peroxisomal. 56–80 (IITGASSGIGAELAKKYARLGCKVT) contacts NAD(+). Ser-194 provides a ligand contact to substrate. Residue Tyr-207 is the Proton acceptor of the active site.

It belongs to the short-chain dehydrogenases/reductases (SDR) family.

The protein localises to the peroxisome membrane. Putative oxidoreductase. The polypeptide is Dehydrogenase/reductase SDR family protein 7-like (Dictyostelium discoideum (Social amoeba)).